The primary structure comprises 493 residues: Glycerol kinase 2 (493 aa).

S12 provides a ligand contact to ADP. ATP contacts are provided by S12 and T13. Residue S12 coordinates sn-glycerol 3-phosphate. K16 is an ADP binding site. Positions 82, 83, 134, and 243 each coordinate sn-glycerol 3-phosphate. 5 residues coordinate glycerol: R82, E83, Y134, D243, and Q244. The ADP site is built by T265 and G308. The ATP site is built by T265, G308, and N312. An ADP-binding site is contributed by N413.

It belongs to the FGGY kinase family. Homotetramer and homodimer (in equilibrium).

The enzyme catalyses glycerol + ATP = sn-glycerol 3-phosphate + ADP + H(+). It participates in polyol metabolism; glycerol degradation via glycerol kinase pathway; sn-glycerol 3-phosphate from glycerol: step 1/1. Its activity is regulated as follows. Activated by phosphorylation and inhibited by fructose 1,6-bisphosphate (FBP). Functionally, key enzyme in the regulation of glycerol uptake and metabolism. Catalyzes the phosphorylation of glycerol to yield sn-glycerol 3-phosphate. This chain is Glycerol kinase 2, found in Clostridium tetani (strain Massachusetts / E88).